A 294-amino-acid polypeptide reads, in one-letter code: DNA replication complex GINS protein SLD5 (294 aa).

This sequence belongs to the GINS4/SLD5 family. In terms of assembly, component of the GINS complex which is a heterotetramer composed of SLD5, PSF1, PSF2 and PSF3. Interacts with PSF2.

Its subcellular location is the nucleus. Required for DNA replication. Functions as part of the GINS complex which plays an essential role in the initiation of DNA replication by binding to DNA replication origins and facilitating the assembly of the DNA replication machinery. The protein is DNA replication complex GINS protein SLD5 of Saccharomyces cerevisiae (strain ATCC 204508 / S288c) (Baker's yeast).